The following is a 240-amino-acid chain: UDP-2,3-diacylglucosamine hydrolase (240 aa).

Mn(2+)-binding residues include D8, H10, D41, N79, and H114. N79–R80 is a substrate binding site. The substrate site is built by D122, S160, N164, K167, and H195. The Mn(2+) site is built by H195 and H197.

The protein belongs to the LpxH family. Requires Mn(2+) as cofactor.

The protein localises to the cell inner membrane. The enzyme catalyses UDP-2-N,3-O-bis[(3R)-3-hydroxytetradecanoyl]-alpha-D-glucosamine + H2O = 2-N,3-O-bis[(3R)-3-hydroxytetradecanoyl]-alpha-D-glucosaminyl 1-phosphate + UMP + 2 H(+). Its pathway is glycolipid biosynthesis; lipid IV(A) biosynthesis; lipid IV(A) from (3R)-3-hydroxytetradecanoyl-[acyl-carrier-protein] and UDP-N-acetyl-alpha-D-glucosamine: step 4/6. Its function is as follows. Hydrolyzes the pyrophosphate bond of UDP-2,3-diacylglucosamine to yield 2,3-diacylglucosamine 1-phosphate (lipid X) and UMP by catalyzing the attack of water at the alpha-P atom. Involved in the biosynthesis of lipid A, a phosphorylated glycolipid that anchors the lipopolysaccharide to the outer membrane of the cell. This chain is UDP-2,3-diacylglucosamine hydrolase, found in Shigella dysenteriae serotype 1 (strain Sd197).